Reading from the N-terminus, the 223-residue chain is Ubiquitin carboxyl-terminal hydrolase isozyme L1 (223 aa).

The residue at position 1 (Met-1) is an N-acetylmethionine. Residues 2-221 enclose the UCH catalytic domain; sequence QLKPMEINPE…VRFSAVALCK (220 aa). The interaction with ubiquitin stretch occupies residues 5–10; the sequence is PMEINP. Catalysis depends on Cys-90, which acts as the Nucleophile. Residue Ser-125 is modified to Phosphoserine. The Proton donor role is filled by His-161. The interval 211–216 is interaction with ubiquitin; sequence EVRFSA. Residue Cys-220 is the site of S-farnesyl cysteine attachment. Residues 221-223 constitute a propeptide, removed in mature form; sequence KAA.

It belongs to the peptidase C12 family. In terms of assembly, monomer. Homodimer. Interacts with SNCA. Interacts with COPS5. In terms of processing, O-glycosylated. Found in neuronal cell bodies and processes throughout the neocortex (at protein level). Expressed in neurons and cells of the diffuse neuroendocrine system and their tumors. Weakly expressed in ovary. Down-regulated in brains from Parkinson disease and Alzheimer disease patients.

Its subcellular location is the cytoplasm. The protein resides in the endoplasmic reticulum membrane. The enzyme catalyses Thiol-dependent hydrolysis of ester, thioester, amide, peptide and isopeptide bonds formed by the C-terminal Gly of ubiquitin (a 76-residue protein attached to proteins as an intracellular targeting signal).. Its function is as follows. Deubiquitinase that plays a role in the regulation of several processes such as maintenance of synaptic function, cardiac function, inflammatory response or osteoclastogenesis. Abrogates the ubiquitination of multiple proteins including WWTR1/TAZ, EGFR, HIF1A and beta-site amyloid precursor protein cleaving enzyme 1/BACE1. In addition, recognizes and hydrolyzes a peptide bond at the C-terminal glycine of ubiquitin to maintain a stable pool of monoubiquitin that is a key requirement for the ubiquitin-proteasome and the autophagy-lysosome pathways. Regulates amyloid precursor protein/APP processing by promoting BACE1 degradation resulting in decreased amyloid beta production. Plays a role in the immune response by regulating the ability of MHC I molecules to reach cross-presentation compartments competent for generating Ag-MHC I complexes. Mediates the 'Lys-48'-linked deubiquitination of the transcriptional coactivator WWTR1/TAZ leading to its stabilization and inhibition of osteoclastogenesis. Deubiquitinates and stabilizes epidermal growth factor receptor EGFR to prevent its degradation and to activate its downstream mediators. Modulates oxidative activity in skeletal muscle by regulating key mitochondrial oxidative proteins. Enhances the activity of hypoxia-inducible factor 1-alpha/HIF1A by abrogateing its VHL E3 ligase-mediated ubiquitination and consequently inhibiting its degradation. This is Ubiquitin carboxyl-terminal hydrolase isozyme L1 (UCHL1) from Homo sapiens (Human).